The sequence spans 335 residues: Tetraacyldisaccharide 4'-kinase (335 aa).

51-58 (HVGGAGKT) is a binding site for ATP.

This sequence belongs to the LpxK family.

It catalyses the reaction a lipid A disaccharide + ATP = a lipid IVA + ADP + H(+). It participates in glycolipid biosynthesis; lipid IV(A) biosynthesis; lipid IV(A) from (3R)-3-hydroxytetradecanoyl-[acyl-carrier-protein] and UDP-N-acetyl-alpha-D-glucosamine: step 6/6. In terms of biological role, transfers the gamma-phosphate of ATP to the 4'-position of a tetraacyldisaccharide 1-phosphate intermediate (termed DS-1-P) to form tetraacyldisaccharide 1,4'-bis-phosphate (lipid IVA). The polypeptide is Tetraacyldisaccharide 4'-kinase (Bradyrhizobium sp. (strain ORS 278)).